The primary structure comprises 106 residues: Urease subunit beta (106 aa).

This sequence belongs to the urease beta subunit family. In terms of assembly, heterotrimer of UreA (gamma), UreB (beta) and UreC (alpha) subunits. Three heterotrimers associate to form the active enzyme. The apoenzyme interacts with an accessory complex composed of UreD, UreF and UreG, which is required for the assembly of the nickel containing metallocenter of UreC. The UreE protein may also play a direct role as a metallochaperone in nickel transfer to the urease apoprotein.

Its subcellular location is the cytoplasm. The enzyme catalyses urea + 2 H2O + H(+) = hydrogencarbonate + 2 NH4(+). It participates in nitrogen metabolism; urea degradation; CO(2) and NH(3) from urea (urease route): step 1/1. With respect to regulation, the apoenzyme can be activated in vitro in the presence of nickel ions and carbon dioxide, which promotes carboxylation of 'Lys-217' of the UreC (alpha) subunit. In Klebsiella aerogenes (Enterobacter aerogenes), this protein is Urease subunit beta.